Consider the following 1154-residue polypeptide: MSSSSRPGRASISPFRSRRTSAAGGGAGVAAAAHPPPARTSSGGRPSTPSSSSSAAGGGRPTTPSSSSAGGRPTTPSAAFARSTTPSSGRPTTPSSASSRAAGRAPPVAAVDAANAKENIMVTVRFRPLSPREINKGDEVAWYANGDNMVRNEYNPSIAYAFDKVFGPATTTRHVYDIAAQHVVSGAMEGINGTVFAYGVTSSGKTHTMHGEQKSPGIIPLAVKDVFSIIQDTPGREFLLRVSYLEIYNEVINDLLDPIGQNLRIREDAQGTYVEGIKEEVVLSPAHALSLIASGEEHRHVGSNNFNLVSSRSHTIFTLTIESSPSGENDEGEVKLSQLNLIDLAGSESSKTETTGLRRKEGSYINKSLLTLGTVIAKLTDGKATHIPYRDSKLTRLLQSSLSGHGRISLICTVTPASSNSEETHNTLKFAHRSKHIEIKASQNKIIDEKSLIKKYQKEITCLKEELQQLRRGMMGNGYIPPTDQEDLVSLKLQLEAGQVKLQSRLEEEEEAKAALMGRIQRLTKLILVSTKSSISSNVSGKASLRRRHSFGEDELAYLPDRKREYSMEDDDVSLDSEFSVEGKLDSNNPDESLRFDRRNRRRGMLGWFKLKKSDQLSGLSTSVDSESTASGSPSFSRSSQQKHPLLDLKDGRRKSMTRKGDDPALTDSFPGRTQAGDLFSAASRARHHLPSGTTIVDQIDLLQEQVKMLAGEVALCTSSLKRLSEQAANNPDDSQIQEQIEKLKNEIDEKKSHIRVLEQRMAQSLETTEDPAIRTEMSQTFSKLSTQLSEKTFELEIMSADNRILQDQLQAKVSENAELVETVAQLRQEIDNLLKTAKNEDNVASMQSSEPSSTSSNPRDLANEVASHSKMPSRTTEDHTESPLKSQVLLQAAEIENLKLDKLRLAEEKDGLEIHSQKLAEESSYAKELAAAAAVELKNLAEEVTRLSYENAKLNADLAAAKDQTRSSIQSDTKRRDQENGIFVEELQKELVASCQREAVLEDTLSQRARRESELLKVIEDAKCHEHDLENELANMWMLVAELKKENSQEDLFQFKATQNGYHSSKSDTGRMMSGMEASDNRNWDGVSVSTYEEAKAAYNVQRRRCKELEGIVSRLKGEDLRGLDVKVLEELQNFHVEALSKICQEKMANQVL.

2 stretches are compositionally biased toward low complexity: residues 1–14 and 29–109; these read MSSSSRPGRASISP and VAAA…PPVA. The transit peptide at 1-21 directs the protein to the chloroplast; the sequence is MSSSSRPGRASISPFRSRRTS. The disordered stretch occupies residues 1–109; it reads MSSSSRPGRA…RAAGRAPPVA (109 aa). The 319-residue stretch at 119 to 437 folds into the Kinesin motor domain; the sequence is NIMVTVRFRP…LKFAHRSKHI (319 aa). 199-206 serves as a coordination point for ATP; sequence GVTSSGKT. Residues 441 to 523 adopt a coiled-coil conformation; that stretch reads ASQNKIIDEK…AALMGRIQRL (83 aa). The interval 620 to 674 is disordered; the sequence is LSTSVDSESTASGSPSFSRSSQQKHPLLDLKDGRRKSMTRKGDDPALTDSFPGRT. Residues 628-640 are compositionally biased toward low complexity; that stretch reads STASGSPSFSRSS. Coiled coils occupy residues 734-761 and 801-845; these read DSQIQEQIEKLKNEIDEKKSHIRVLEQR and ADNR…DNVA. The tract at residues 838–885 is disordered; sequence AKNEDNVASMQSSEPSSTSSNPRDLANEVASHSKMPSRTTEDHTESPL. The span at 846–857 shows a compositional bias: low complexity; sequence SMQSSEPSSTSS. A coiled-coil region spans residues 894-967; that stretch reads AEIENLKLDK…DLAAAKDQTR (74 aa).

This sequence belongs to the TRAFAC class myosin-kinesin ATPase superfamily. Kinesin family. KIN-7 subfamily.

The protein localises to the plastid. It is found in the chloroplast. This is Kinesin-like protein KIN-7E, chloroplastic from Oryza sativa subsp. japonica (Rice).